A 697-amino-acid chain; its full sequence is Lebercilin (697 aa).

The interval 1 to 90 is disordered; sequence MGERAGSPGT…VGFRSQSLNR (90 aa). Phosphoserine is present on residues Ser-7 and Ser-45. The span at 32 to 45 shows a compositional bias: low complexity; it reads SSGRSSLVSSSPAS. Coiled-coil stretches lie at residues 103–297 and 389–485; these read RILS…IKNI and EEKF…RNLK. Disordered regions lie at residues 412 to 432, 522 to 548, and 606 to 697; these read WERE…EREE, HHLQ…PASP, and EQLF…VALR. Over residues 416 to 432 the composition is skewed to basic and acidic residues; the sequence is ELDKKQKEKASLLEREE. Residues 527-547 show a composition bias toward polar residues; sequence ISFSTPKGEGQNSGNVRSPAS. Residues 612–626 show a composition bias toward low complexity; sequence SGSSTISSKSSDPNS. The segment covering 686–697 has biased composition (acidic residues); it reads SVEDEIEEVALR.

It belongs to the LCA5 family. In terms of assembly, interacts with NINL. Interacts with OFD1. Interacts with FAM161A. Interacts with components of the IFT complex B. In terms of tissue distribution, widely expressed.

It localises to the cytoplasm. It is found in the cytoskeleton. Its subcellular location is the cilium axoneme. The protein resides in the cilium basal body. The protein localises to the microtubule organizing center. It localises to the centrosome. It is found in the cell projection. Its subcellular location is the cilium. In terms of biological role, involved in intraflagellar protein (IFT) transport in photoreceptor cilia. This chain is Lebercilin (LCA5), found in Homo sapiens (Human).